Consider the following 264-residue polypeptide: Thymidylate synthase (264 aa).

Arginine 21 provides a ligand contact to dUMP. Histidine 51 contacts (6R)-5,10-methylene-5,6,7,8-tetrahydrofolate. 126-127 (RR) contributes to the dUMP binding site. The Nucleophile role is filled by cysteine 146. Residues 166 to 169 (RSAD), asparagine 177, and 207 to 209 (HLY) contribute to the dUMP site. Aspartate 169 serves as a coordination point for (6R)-5,10-methylene-5,6,7,8-tetrahydrofolate. Serine 263 contributes to the (6R)-5,10-methylene-5,6,7,8-tetrahydrofolate binding site.

This sequence belongs to the thymidylate synthase family. Bacterial-type ThyA subfamily. In terms of assembly, homodimer.

It is found in the cytoplasm. The enzyme catalyses dUMP + (6R)-5,10-methylene-5,6,7,8-tetrahydrofolate = 7,8-dihydrofolate + dTMP. The protein operates within pyrimidine metabolism; dTTP biosynthesis. In terms of biological role, catalyzes the reductive methylation of 2'-deoxyuridine-5'-monophosphate (dUMP) to 2'-deoxythymidine-5'-monophosphate (dTMP) while utilizing 5,10-methylenetetrahydrofolate (mTHF) as the methyl donor and reductant in the reaction, yielding dihydrofolate (DHF) as a by-product. This enzymatic reaction provides an intracellular de novo source of dTMP, an essential precursor for DNA biosynthesis. The protein is Thymidylate synthase of Neisseria meningitidis serogroup B (strain ATCC BAA-335 / MC58).